A 614-amino-acid polypeptide reads, in one-letter code: Chaperone protein DnaK (614 aa).

At T176 the chain carries Phosphothreonine; by autocatalysis. Residues 576 to 614 (YQQQQSQGGEAGAANGDASKKDDNTVDGDFHEVHDDDKK) form a disordered region. A compositionally biased stretch (low complexity) spans 577–589 (QQQQSQGGEAGAA). Residues 593–614 (ASKKDDNTVDGDFHEVHDDDKK) are compositionally biased toward basic and acidic residues.

The protein belongs to the heat shock protein 70 family.

In terms of biological role, acts as a chaperone. The protein is Chaperone protein DnaK of Fructilactobacillus sanfranciscensis (Lactobacillus sanfranciscensis).